We begin with the raw amino-acid sequence, 259 residues long: Adenosylcobinamide-GDP ribazoletransferase (259 aa).

The next 6 helical transmembrane spans lie at 9–29 (NLFF…WIEV), 43–63 (LVGL…LYWV), 64–84 (SPSI…GGFH), 118–138 (ALAL…LALF), 143–163 (VSLA…SFIF), and 190–210 (ILLA…ALVL).

This sequence belongs to the CobS family. Mg(2+) serves as cofactor.

The protein localises to the cell inner membrane. It catalyses the reaction alpha-ribazole + adenosylcob(III)inamide-GDP = adenosylcob(III)alamin + GMP + H(+). It carries out the reaction alpha-ribazole 5'-phosphate + adenosylcob(III)inamide-GDP = adenosylcob(III)alamin 5'-phosphate + GMP + H(+). The protein operates within cofactor biosynthesis; adenosylcobalamin biosynthesis; adenosylcobalamin from cob(II)yrinate a,c-diamide: step 7/7. Joins adenosylcobinamide-GDP and alpha-ribazole to generate adenosylcobalamin (Ado-cobalamin). Also synthesizes adenosylcobalamin 5'-phosphate from adenosylcobinamide-GDP and alpha-ribazole 5'-phosphate. This Shewanella pealeana (strain ATCC 700345 / ANG-SQ1) protein is Adenosylcobinamide-GDP ribazoletransferase.